The following is a 206-amino-acid chain: Fibroblast growth factor 4 (206 aa).

A signal peptide spans 1 to 29; that stretch reads MAGPGTAAAALLPAVLLAVLAPWAGRGGA.

It belongs to the heparin-binding growth factors family. Interacts with FGFR1, FGFR2, FGFR3 and FGFR4. Affinity between fibroblast growth factors (FGFs) and their receptors is increased by heparan sulfate glycosaminoglycans that function as coreceptors.

The protein resides in the secreted. Its function is as follows. Plays an important role in the regulation of embryonic development, cell proliferation, and cell differentiation. Required for normal limb and cardiac valve development during embryogenesis. May play a role in embryonic molar tooth bud development via inducing the expression of MSX1, MSX2 and MSX1-mediated expression of SDC1 in dental mesenchyme cells. The chain is Fibroblast growth factor 4 from Bos taurus (Bovine).